The sequence spans 276 residues: uncharacterized protein (276 aa).

The first 25 residues, 1–25 (MNKKRLLPKASLGALFMLFGTALTA), serve as a signal peptide directing secretion. Cys-26 carries the N-palmitoyl cysteine lipid modification. The S-diacylglycerol cysteine moiety is linked to residue Cys-26.

It belongs to the MG439/MG440 family.

The protein resides in the cell membrane. This is an uncharacterized protein from Mycoplasma pneumoniae (strain ATCC 29342 / M129 / Subtype 1) (Mycoplasmoides pneumoniae).